The primary structure comprises 69 residues: Conotoxin Lt5.10 (69 aa).

An N-terminal signal peptide occupies residues 1 to 19; sequence MLCLPVFIILLLLASPAAP. Positions 20–54 are excised as a propeptide; the sequence is KSLETRIQNDLIRAGLTDADLKTEKGFLSGLLNVA.

It belongs to the conotoxin T superfamily. Post-translationally, contains 2 disulfide bonds that can be either 'C1-C3, C2-C4' or 'C1-C4, C2-C3', since these disulfide connectivities have been observed for conotoxins with cysteine framework V (for examples, see AC P0DQQ7 and AC P81755). As to expression, expressed by the venom duct.

Its subcellular location is the secreted. The protein is Conotoxin Lt5.10 of Conus litteratus (Lettered cone).